Here is a 392-residue protein sequence, read N- to C-terminus: General receptor for phosphoinositides 1-associated scaffold protein (392 aa).

The interval 1–50 (MTLRRLRKLQQKEEATAAPDPAGRAPDSEAARAAPLPSGPPAAAAPPGAP) is disordered. Residues 37–49 (PSGPPAAAAPPGA) show a composition bias toward pro residues. Threonine 76 carries the post-translational modification Phosphothreonine. Serine 93 is modified (phosphoserine). The PDZ domain occupies 100–189 (VLTLEKGDNQ…VLRLETLYGT (90 aa)). The interval 180 to 257 (VLRLETLYGT…GAGLLPGSLP (78 aa)) is interaction with PSCD3. A Phosphotyrosine modification is found at tyrosine 236. Arginine 269 is subject to Omega-N-methylarginine. The interval 294 to 315 (PQALPPPPPPARALGPSSAETP) is disordered. The residue at position 384 (serine 384) is a Phosphoserine.

Heteromer. Composed of TAMALIN, CYTH2 and at least one GRM1. Also interacts with GRM2, GRM3 and GRM5. Interacts with CYTH3. In terms of tissue distribution, highly expressed in brain, heart and lung, and to a lower extent in embryo, kidney and ovary.

It localises to the cytoplasm. The protein resides in the perinuclear region. It is found in the cell membrane. Its subcellular location is the postsynaptic cell membrane. Functionally, plays a role in intracellular trafficking and contributes to the macromolecular organization of group 1 metabotropic glutamate receptors (mGluRs) at synapses. In Mus musculus (Mouse), this protein is General receptor for phosphoinositides 1-associated scaffold protein.